Consider the following 204-residue polypeptide: Imidazole glycerol phosphate synthase subunit HisH (204 aa).

The region spanning 1 to 204 is the Glutamine amidotransferase type-1 domain; it reads MIKIVDYGLG…MTLLKNFSEI (204 aa). C80 serves as the catalytic Nucleophile. Catalysis depends on residues H186 and E188.

Heterodimer of HisH and HisF.

The protein localises to the cytoplasm. The catalysed reaction is 5-[(5-phospho-1-deoxy-D-ribulos-1-ylimino)methylamino]-1-(5-phospho-beta-D-ribosyl)imidazole-4-carboxamide + L-glutamine = D-erythro-1-(imidazol-4-yl)glycerol 3-phosphate + 5-amino-1-(5-phospho-beta-D-ribosyl)imidazole-4-carboxamide + L-glutamate + H(+). It carries out the reaction L-glutamine + H2O = L-glutamate + NH4(+). Its pathway is amino-acid biosynthesis; L-histidine biosynthesis; L-histidine from 5-phospho-alpha-D-ribose 1-diphosphate: step 5/9. Functionally, IGPS catalyzes the conversion of PRFAR and glutamine to IGP, AICAR and glutamate. The HisH subunit catalyzes the hydrolysis of glutamine to glutamate and ammonia as part of the synthesis of IGP and AICAR. The resulting ammonia molecule is channeled to the active site of HisF. This Bdellovibrio bacteriovorus (strain ATCC 15356 / DSM 50701 / NCIMB 9529 / HD100) protein is Imidazole glycerol phosphate synthase subunit HisH.